The following is a 113-amino-acid chain: Large ribosomal subunit protein bL20c (113 aa).

Belongs to the bacterial ribosomal protein bL20 family.

The protein resides in the plastid. The protein localises to the chloroplast. Binds directly to 23S ribosomal RNA and is necessary for the in vitro assembly process of the 50S ribosomal subunit. It is not involved in the protein synthesizing functions of that subunit. In Staurastrum punctulatum (Green alga), this protein is Large ribosomal subunit protein bL20c.